We begin with the raw amino-acid sequence, 245 residues long: Pyridoxine 5'-phosphate synthase (245 aa).

3-amino-2-oxopropyl phosphate-binding residues include Asn-8 and Arg-19. The active-site Proton acceptor is His-44. 1-deoxy-D-xylulose 5-phosphate contacts are provided by Arg-46 and His-51. Glu-76 serves as the catalytic Proton acceptor. 1-deoxy-D-xylulose 5-phosphate is bound at residue Thr-106. His-198 (proton donor) is an active-site residue. Residues Asp-199 and 221 to 222 (GH) contribute to the 3-amino-2-oxopropyl phosphate site.

Belongs to the PNP synthase family. Homooctamer; tetramer of dimers.

The protein localises to the cytoplasm. It catalyses the reaction 3-amino-2-oxopropyl phosphate + 1-deoxy-D-xylulose 5-phosphate = pyridoxine 5'-phosphate + phosphate + 2 H2O + H(+). The protein operates within cofactor biosynthesis; pyridoxine 5'-phosphate biosynthesis; pyridoxine 5'-phosphate from D-erythrose 4-phosphate: step 5/5. In terms of biological role, catalyzes the complicated ring closure reaction between the two acyclic compounds 1-deoxy-D-xylulose-5-phosphate (DXP) and 3-amino-2-oxopropyl phosphate (1-amino-acetone-3-phosphate or AAP) to form pyridoxine 5'-phosphate (PNP) and inorganic phosphate. The chain is Pyridoxine 5'-phosphate synthase from Brucella anthropi (strain ATCC 49188 / DSM 6882 / CCUG 24695 / JCM 21032 / LMG 3331 / NBRC 15819 / NCTC 12168 / Alc 37) (Ochrobactrum anthropi).